A 184-amino-acid chain; its full sequence is Chromophore lyase CpcS/CpeS 1 (184 aa).

Belongs to the CpcS/CpeS biliprotein lyase family.

Its function is as follows. Covalently attaches a chromophore to Cys residue(s) of phycobiliproteins. This Synechococcus sp. (strain JA-3-3Ab) (Cyanobacteria bacterium Yellowstone A-Prime) protein is Chromophore lyase CpcS/CpeS 1.